We begin with the raw amino-acid sequence, 95 residues long: Co-chaperonin GroES (95 aa).

The protein belongs to the GroES chaperonin family. In terms of assembly, heptamer of 7 subunits arranged in a ring. Interacts with the chaperonin GroEL.

The protein localises to the cytoplasm. In terms of biological role, together with the chaperonin GroEL, plays an essential role in assisting protein folding. The GroEL-GroES system forms a nano-cage that allows encapsulation of the non-native substrate proteins and provides a physical environment optimized to promote and accelerate protein folding. GroES binds to the apical surface of the GroEL ring, thereby capping the opening of the GroEL channel. The sequence is that of Co-chaperonin GroES from Ruegeria pomeroyi (strain ATCC 700808 / DSM 15171 / DSS-3) (Silicibacter pomeroyi).